The following is a 436-amino-acid chain: Trigger factor (436 aa).

In terms of domain architecture, PPIase FKBP-type spans 163 to 248 (GDRVTVDFEG…VKKIEAAHLP (86 aa)).

Belongs to the FKBP-type PPIase family. Tig subfamily.

The protein resides in the cytoplasm. The enzyme catalyses [protein]-peptidylproline (omega=180) = [protein]-peptidylproline (omega=0). Involved in protein export. Acts as a chaperone by maintaining the newly synthesized protein in an open conformation. Functions as a peptidyl-prolyl cis-trans isomerase. The protein is Trigger factor of Acidovorax ebreus (strain TPSY) (Diaphorobacter sp. (strain TPSY)).